The sequence spans 313 residues: tRNA uridine(34) hydroxylase (313 aa).

Residues 124–218 (SDPEVLLIDT…YLEEVPQQES (95 aa)) enclose the Rhodanese domain. Cysteine 178 acts as the Cysteine persulfide intermediate in catalysis.

This sequence belongs to the TrhO family.

It carries out the reaction uridine(34) in tRNA + AH2 + O2 = 5-hydroxyuridine(34) in tRNA + A + H2O. Functionally, catalyzes oxygen-dependent 5-hydroxyuridine (ho5U) modification at position 34 in tRNAs. This chain is tRNA uridine(34) hydroxylase, found in Pseudomonas fluorescens (strain ATCC BAA-477 / NRRL B-23932 / Pf-5).